The chain runs to 717 residues: Methionine--tRNA ligase (717 aa).

The 'HIGH' region signature appears at 19–29 (PYANGDLHVGH). 4 residues coordinate Zn(2+): cysteine 150, cysteine 153, cysteine 162, and cysteine 166. The 'KMSKS' region signature appears at 356–360 (ALSTS). Threonine 359 is an ATP binding site. The interval 573-603 (ERVEEASEASAEASNEGGEAAGDEVDDGDVD) is disordered. The segment covering 580–590 (EASAEASNEGG) has biased composition (low complexity). Over residues 593–603 (AGDEVDDGDVD) the composition is skewed to acidic residues. The tRNA-binding domain maps to 619–717 (DFEGVDMRVG…EDAPLGTRIK (99 aa)).

This sequence belongs to the class-I aminoacyl-tRNA synthetase family. MetG type 1 subfamily. Homodimer. It depends on Zn(2+) as a cofactor.

Its subcellular location is the cytoplasm. It catalyses the reaction tRNA(Met) + L-methionine + ATP = L-methionyl-tRNA(Met) + AMP + diphosphate. In terms of biological role, is required not only for elongation of protein synthesis but also for the initiation of all mRNA translation through initiator tRNA(fMet) aminoacylation. The sequence is that of Methionine--tRNA ligase from Haloarcula marismortui (strain ATCC 43049 / DSM 3752 / JCM 8966 / VKM B-1809) (Halobacterium marismortui).